We begin with the raw amino-acid sequence, 69 residues long: Sec-independent protein translocase protein TatA (69 aa).

The helical transmembrane segment at 1 to 21 (MFGLGGQELILILLIILLLFG) threads the bilayer.

Belongs to the TatA/E family. As to quaternary structure, forms a complex with TatC.

The protein localises to the cell inner membrane. Part of the twin-arginine translocation (Tat) system that transports large folded proteins containing a characteristic twin-arginine motif in their signal peptide across membranes. TatA could form the protein-conducting channel of the Tat system. This Pelodictyon phaeoclathratiforme (strain DSM 5477 / BU-1) protein is Sec-independent protein translocase protein TatA.